A 791-amino-acid polypeptide reads, in one-letter code: Lon protease (791 aa).

Positions 28 to 223 (LPVVVISEIM…YILQDIQSLL (196 aa)) constitute a Lon N-terminal domain. ATP is bound at residue 374-381 (GPPGVGKT). The Lon proteolytic domain occupies 610 to 791 (KEKIGSTNGL…SDVFSQVFVV (182 aa)). Catalysis depends on residues Ser697 and Lys740.

Belongs to the peptidase S16 family. Homohexamer. Organized in a ring with a central cavity.

It is found in the cytoplasm. It carries out the reaction Hydrolysis of proteins in presence of ATP.. Functionally, ATP-dependent serine protease that mediates the selective degradation of mutant and abnormal proteins as well as certain short-lived regulatory proteins. Required for cellular homeostasis and for survival from DNA damage and developmental changes induced by stress. Degrades polypeptides processively to yield small peptide fragments that are 5 to 10 amino acids long. Binds to DNA in a double-stranded, site-specific manner. The chain is Lon protease from Aster yellows witches'-broom phytoplasma (strain AYWB).